Here is a 482-residue protein sequence, read N- to C-terminus: Glutamate--tRNA ligase 2 (482 aa).

The short motif at 8–18 is the 'HIGH' region element; sequence PSPTGQLHIGG. A 'KMSKS' region motif is present at residues 249–253; sequence KLSKR. Residue K252 participates in ATP binding.

The protein belongs to the class-I aminoacyl-tRNA synthetase family. Glutamate--tRNA ligase type 1 subfamily. In terms of assembly, monomer.

The protein localises to the cytoplasm. The enzyme catalyses tRNA(Glu) + L-glutamate + ATP = L-glutamyl-tRNA(Glu) + AMP + diphosphate. Functionally, catalyzes the attachment of glutamate to tRNA(Glu) in a two-step reaction: glutamate is first activated by ATP to form Glu-AMP and then transferred to the acceptor end of tRNA(Glu). The polypeptide is Glutamate--tRNA ligase 2 (Caldicellulosiruptor saccharolyticus (strain ATCC 43494 / DSM 8903 / Tp8T 6331)).